The primary structure comprises 266 residues: Glucosamine-6-phosphate deaminase (266 aa).

D67 (proton acceptor; for enolization step) is an active-site residue. The active-site For ring-opening step is N139. The active-site Proton acceptor; for ring-opening step is the H141. The For ring-opening step role is filled by E146.

The protein belongs to the glucosamine/galactosamine-6-phosphate isomerase family. NagB subfamily. In terms of assembly, homohexamer.

The enzyme catalyses alpha-D-glucosamine 6-phosphate + H2O = beta-D-fructose 6-phosphate + NH4(+). It participates in amino-sugar metabolism; N-acetylneuraminate degradation; D-fructose 6-phosphate from N-acetylneuraminate: step 5/5. Its function is as follows. Catalyzes the reversible isomerization-deamination of glucosamine 6-phosphate (GlcN6P) to form fructose 6-phosphate (Fru6P) and ammonium ion. The polypeptide is Glucosamine-6-phosphate deaminase (Marinomonas sp. (strain MWYL1)).